Consider the following 164-residue polypeptide: UPF0201 protein MA_4659 (164 aa).

This sequence belongs to the UPF0201 family.

This is UPF0201 protein MA_4659 from Methanosarcina acetivorans (strain ATCC 35395 / DSM 2834 / JCM 12185 / C2A).